The following is a 1859-amino-acid chain: MNSTPGDTRDAPAPSHPAPSHRQCLLPSVAHTPSVTEVTPAKKITFLKRGDPQFAGVRLAVHQRTFKTFSSLMDELSQRMPLSFGVRSVTTPRGLHGLSALEQLQDGGCYLCSDRKPPKTSREPGRLQRKSPSAGQAQVFQGGHEAPETSYSWKGPVAPRRLTLVKNGDPRRQQTVVLSHKNTRSLAAFLGKASELLRFPVKQVYTTRGKKVDSLQTLLDGPSVLVCAGNEAFRCLEMENDRGNRTRKLSSVTARSERGCWGPNAKQSVIHSRGRSGGKLRQVSLTSERSGLSDHPASGHRAWAGPALDRCPQDMPVPPGSLVAADDVEKKVCMNEDGSLSVEMKVRFQLLGEDTLRWSQRVGQASVFTAASGKGQDPREADRFCCRQEGYPWGILKPGAQGLGSYDGGCQEAFDVGQKSQPSYDIWRNPLATPEGTGPTPRRRWGLAKLSGCKSHWRQEANHRKGHDKDNLSRVSTPRHPRSVQPGSCCPWTPDGDTGSDTLHPVSSASSHNETDLESGEGLCLEDTGPHGSRPETQSTERALSDTSVSAKSREESSEGGGQLHRSSSQARVMASREQVTKGDNPCISTQSHLPLNHMGLQTEKYRQGTRGWEVSGEPELRLALVPGHSGSQDTQRDALPAPACAPAQWRQRKQKRPASVECLPSVSVPYQVAQKGHARQDHYYRDTQSSLDTALQMPMPQEREQACPGSPAPQSPSNSPSAGNQASEDLRSPFSSSLDLQEPQATSKATTIAVSGSDCVCHSTRSVEPAGDTKCQAHSSTPTPAHRGELGCLWDKAGTTPEPFSFSVLLDRCPEADDPRTYHDCCCLQAVPSSPLAAPSGQTQTSISEACLGGSSFCPTPPKEQTCFGRESASNGSTSSGHSRADGFAGPRRTLLVKSPGVRGSLEEREADGGVTPSALPYASPDAVVREWLGNIPEKPVLMTYEMADENTEVPSDGPEGPKEDSLKVLGEPSQAKQQPPEGATNEHPEPAGVLSGPGSVCCRLGGDLHPDATSGERLKAPAEAGIGEGARVDHGVSLCALPTKVAASTQIMKALLGSKPGRPSSLPEVSSTVAQRLSSSAGAFIACLARLHFFDESLGPLDGKVRLEESPKYQEMLRLFQTLWPGSELWQGQLDFSLRKLTSHQALLGTEDFTPTSSSGVDVSSGSGGSGESSVPCVMDNTLAPEKRDLPLKIPSQRPDSRNQGYPELVGHSTVSSVSQVRACATGGEETGKGGRKQTWGNAPEQSVHSTMLEGDALSEETEGRVRERLQENSVHGKGLPEEGVRVCSQEMLAAGSQDGAGSPEDTRVPTDEAGADAASGGLWPLDGREEPTESPQHFSESNSRVREHQSAHKLELGLEEVSRLDARGCKQACIKASSGTMAHKGSLDPDPIWVSKLLKKIEKAFMAHLADATAELRARWDLHDNHLLDQMVTELEQDVGRRLQASTVMEVRKIQSRAGRMVPEPPREALRGQASLQTEQRRRRLQGLRNFSAVPGQGPLSLTLEDGPTLKTALGTKSGAEPAEDEFCPCEICLKKKRTPRFPKDAATVSGAPVRKAFDLQQILQSKKGGSSNREAMEVAPQRTGRMLSQEDLGTVQGADEKQGLGVAEGEEGEGKQRLRAEEDPEILKTEGSGCCAPEEDEATEEDGEICIGTAQESQQLEGTEMGKEGTLPQSFRDGGTLEAPARQGTHSVEIQEASRERQQEVEGRHQDVKEDSPWVSSGESQGRVGSENTSLDQEGRLLNHHQRPGPQSHHTACSSRALSLDNSSQVSQKGSDGDLTSGDLKCTKAKNSRVLHAEKKVPVMYPERSSSEQEVPSSPRLPKQGKGEDEGSAGSLACTQVGGKVDGFGQDDLDF.

2 disordered regions span residues 1–22 (MNSTPGDTRDAPAPSHPAPSHR) and 115–154 (RKPPKTSREPGRLQRKSPSAGQAQVFQGGHEAPETSYSWK). A Doublecortin 1 domain is found at 42-126 (KKITFLKRGD…PPKTSREPGR (85 aa)). Residues 115–126 (RKPPKTSREPGR) show a composition bias toward basic and acidic residues. Positions 130 to 139 (KSPSAGQAQV) are enriched in polar residues. The 80-residue stretch at 160 to 239 (RRLTLVKNGD…NEAFRCLEME (80 aa)) folds into the Doublecortin 2 domain. Disordered regions lie at residues 263-301 (PNAKQSVIHSRGRSGGKLRQVSLTSERSGLSDHPASGHR), 426-445 (IWRNPLATPEGTGPTPRRRW), 457-593 (WRQE…TQSH), 700-750 (MPQE…TSKA), 868-920 (CFGR…TPSA), 952-997 (NTEV…GVLS), 1152-1211 (TEDF…YPEL), 1227-1255 (ATGGEETGKGGRKQTWGNAPEQSVHSTML), 1298-1350 (GSQD…RVRE), and 1567-1859 (LQSK…DLDF). Over residues 457-472 (WRQEANHRKGHDKDNL) the composition is skewed to basic and acidic residues. Polar residues-rich tracts occupy residues 499–512 (GSDTLHPVSSASSH) and 535–551 (PETQSTERALSDTSVSA). A compositionally biased stretch (low complexity) spans 716–728 (SPSNSPSAGNQAS). Over residues 734-750 (PFSSSLDLQEPQATSKA) the composition is skewed to polar residues. Low complexity predominate over residues 870-883 (GRESASNGSTSSGH). Composition is skewed to polar residues over residues 1241 to 1252 (TWGNAPEQSVHS), 1336 to 1345 (ESPQHFSESN), and 1567 to 1577 (LQSKKGGSSNR). Residues 1616 to 1632 (GEGKQRLRAEEDPEILK) show a composition bias toward basic and acidic residues. Residues 1641 to 1652 (PEEDEATEEDGE) are compositionally biased toward acidic residues. Over residues 1700–1720 (EASRERQQEVEGRHQDVKEDS) the composition is skewed to basic and acidic residues. The span at 1756-1778 (SHHTACSSRALSLDNSSQVSQKG) shows a compositional bias: polar residues.

Interacts with RP1; has a synergistic effect with RP1 in photoreceptor differentiation. Retinal-specific; expressed in photoreceptor.

The protein localises to the cytoplasm. The protein resides in the cytoskeleton. It is found in the cilium axoneme. Its subcellular location is the cell projection. It localises to the cilium. The protein localises to the photoreceptor outer segment. In terms of biological role, required for the differentiation of photoreceptor cells. Plays a role in the organization of outer segment of rod and cone photoreceptors. This Mus musculus (Mouse) protein is Retinitis pigmentosa 1-like 1 protein (Rp1l1).